Consider the following 459-residue polypeptide: tRNA modification GTPase MnmE (459 aa).

Positions 23, 86, and 125 each coordinate (6S)-5-formyl-5,6,7,8-tetrahydrofolate. Positions 221–380 constitute a TrmE-type G domain; the sequence is GIDAVIIGKP…LENAITELFV (160 aa). Asn-231 is a binding site for K(+). Residues 231-236, 250-256, and 275-278 each bind GTP; these read NVGKSS, TDIPGTT, and DTAG. A Mg(2+)-binding site is contributed by Ser-235. K(+)-binding residues include Thr-250, Ile-252, and Thr-255. Thr-256 provides a ligand contact to Mg(2+). Lys-459 is a binding site for (6S)-5-formyl-5,6,7,8-tetrahydrofolate.

Belongs to the TRAFAC class TrmE-Era-EngA-EngB-Septin-like GTPase superfamily. TrmE GTPase family. As to quaternary structure, homodimer. Heterotetramer of two MnmE and two MnmG subunits. K(+) is required as a cofactor.

The protein localises to the cytoplasm. Functionally, exhibits a very high intrinsic GTPase hydrolysis rate. Involved in the addition of a carboxymethylaminomethyl (cmnm) group at the wobble position (U34) of certain tRNAs, forming tRNA-cmnm(5)s(2)U34. The polypeptide is tRNA modification GTPase MnmE (Acetivibrio thermocellus (strain ATCC 27405 / DSM 1237 / JCM 9322 / NBRC 103400 / NCIMB 10682 / NRRL B-4536 / VPI 7372) (Clostridium thermocellum)).